Reading from the N-terminus, the 60-residue chain is Large ribosomal subunit protein bL33 (60 aa).

Belongs to the bacterial ribosomal protein bL33 family.

In Chlorobium luteolum (strain DSM 273 / BCRC 81028 / 2530) (Pelodictyon luteolum), this protein is Large ribosomal subunit protein bL33.